Here is a 150-residue protein sequence, read N- to C-terminus: S-protein homolog 24 (150 aa).

N122 is a glycosylation site (N-linked (GlcNAc...) asparagine).

This sequence belongs to the plant self-incompatibility (S1) protein family.

It localises to the secreted. The protein is S-protein homolog 24 of Arabidopsis thaliana (Mouse-ear cress).